The chain runs to 553 residues: Putative transport protein PM1071 (553 aa).

5 helical membrane-spanning segments follow: residues 4-24 (IAIT…IGHW), 28-48 (GVGL…HFTN), 65-85 (FGLI…FFAS), 91-111 (LKLN…VIVI), and 157-177 (MAYA…MWLI). RCK C-terminal domains are found at residues 190–276 (KNFL…VLGE) and 277–361 (EVDV…ILGN). The next 6 membrane-spanning stretches (helical) occupy residues 371–391 (MLPV…PFHI), 403–425 (AGGP…LYWF), 439–459 (IVLF…DTLV), 464–484 (LEWM…VGIV), 496–516 (LCGL…ANAI), and 533–553 (LVMF…WTLL).

The protein belongs to the AAE transporter (TC 2.A.81) family. YidE subfamily.

It localises to the cell membrane. The protein is Putative transport protein PM1071 of Pasteurella multocida (strain Pm70).